Consider the following 882-residue polypeptide: Chondroitin sulfate synthase 3 (882 aa).

The Cytoplasmic segment spans residues M1 to R7. A helical; Signal-anchor for type II membrane protein membrane pass occupies residues P8–A28. Topologically, residues P29–S882 are lumenal. The tract at residues S46 to A167 is disordered. Composition is skewed to low complexity over residues A59 to R69 and G120 to E131. N-linked (GlcNAc...) asparagine glycans are attached at residues N155, N279, and N710. A divalent metal cation contacts are provided by D720 and H834. The N-linked (GlcNAc...) asparagine glycan is linked to N878.

The protein belongs to the chondroitin N-acetylgalactosaminyltransferase family. Co(2+) serves as cofactor. It depends on Mn(2+) as a cofactor. Cd(2+) is required as a cofactor. In terms of tissue distribution, detected at low levels in brain, cerebral cortex, uterus and small intestine.

The protein resides in the golgi apparatus. It is found in the golgi stack membrane. It catalyses the reaction 3-O-(beta-D-GlcA-(1-&gt;3)-beta-D-GalNAc-(1-&gt;4)-beta-D-GlcA-(1-&gt;3)-beta-D-Gal-(1-&gt;3)-beta-D-Gal-(1-&gt;4)-beta-D-Xyl)-L-seryl-[protein] + UDP-N-acetyl-alpha-D-galactosamine = 3-O-(beta-D-GalNAc-(1-&gt;4)-beta-D-GlcA-(1-&gt;3)-beta-D-GalNAc-(1-&gt;4)-beta-D-GlcA-(1-&gt;3)-beta-D-Gal-(1-&gt;3)-beta-D-Gal-(1-&gt;4)-beta-D-Xyl)-L-seryl-[protein] + UDP + H(+). The catalysed reaction is 3-O-{beta-D-GlcA-(1-&gt;3)-[beta-D-GalNAc-(1-&gt;4)-beta-D-GlcA-(1-&gt;3)](n)-beta-D-GalNAc-(1-&gt;4)-beta-D-GlcA-(1-&gt;3)-beta-D-Gal-(1-&gt;3)-beta-D-Gal-(1-&gt;4)-beta-D-Xyl}-L-seryl-[protein] + UDP-N-acetyl-alpha-D-galactosamine = 3-O-{[beta-D-GalNAc-(1-&gt;4)-beta-D-GlcA-(1-&gt;3)](n+1)-beta-D-GalNAc-(1-&gt;4)-beta-D-GlcA-(1-&gt;3)-beta-D-Gal-(1-&gt;3)-beta-D-Gal-(1-&gt;4)-beta-D-Xyl}-L-seryl-[protein] + UDP + H(+). The enzyme catalyses 3-O-(beta-D-GalNAc-(1-&gt;4)-beta-D-GlcA-(1-&gt;3)-beta-D-Gal-(1-&gt;3)-beta-D-Gal-(1-&gt;4)-beta-D-Xyl)-L-seryl-[protein] + UDP-alpha-D-glucuronate = 3-O-(beta-D-GlcA-(1-&gt;3)-beta-D-GalNAc-(1-&gt;4)-beta-D-GlcA-(1-&gt;3)-beta-D-Gal-(1-&gt;3)-beta-D-Gal-(1-&gt;4)-beta-D-Xyl)-L-seryl-[protein] + UDP + H(+). It carries out the reaction 3-O-{[beta-D-GalNAc-(1-&gt;4)-beta-D-GlcA-(1-&gt;3)](n)-beta-D-GalNAc-(1-&gt;4)-beta-D-GlcA-(1-&gt;3)-beta-D-Gal-(1-&gt;3)-beta-D-Gal-(1-&gt;4)-beta-D-Xyl}-L-seryl-[protein] + UDP-alpha-D-glucuronate = 3-O-{beta-D-GlcA-(1-&gt;3)-[beta-D-GalNAc-(1-&gt;4)-beta-D-GlcA-(1-&gt;3)](n)-beta-D-GalNAc-(1-&gt;4)-beta-D-GlcA-(1-&gt;3)-beta-D-Gal-(1-&gt;3)-beta-D-Gal-(1-&gt;4)-beta-D-Xyl}-L-seryl-[protein] + UDP + H(+). Its function is as follows. Has both beta-1,3-glucuronic acid and beta-1,4-N-acetylgalactosamine transferase activity. Transfers glucuronic acid (GlcUA) from UDP-GlcUA and N-acetylgalactosamine (GalNAc) from UDP-GalNAc to the non-reducing end of the elongating chondroitin polymer. Specific activity is much reduced compared to CHSY1. The polypeptide is Chondroitin sulfate synthase 3 (CHSY3) (Homo sapiens (Human)).